Here is a 422-residue protein sequence, read N- to C-terminus: Gamma-glutamyl phosphate reductase (422 aa).

The protein belongs to the gamma-glutamyl phosphate reductase family.

It localises to the cytoplasm. The enzyme catalyses L-glutamate 5-semialdehyde + phosphate + NADP(+) = L-glutamyl 5-phosphate + NADPH + H(+). The protein operates within amino-acid biosynthesis; L-proline biosynthesis; L-glutamate 5-semialdehyde from L-glutamate: step 2/2. Its function is as follows. Catalyzes the NADPH-dependent reduction of L-glutamate 5-phosphate into L-glutamate 5-semialdehyde and phosphate. The product spontaneously undergoes cyclization to form 1-pyrroline-5-carboxylate. The sequence is that of Gamma-glutamyl phosphate reductase from Shewanella piezotolerans (strain WP3 / JCM 13877).